Consider the following 405-residue polypeptide: MTQATSERVIWRNARLATLNPDYSQPYGLLERHALLVRNGRIEAIVADADAPGGRSIDLEGRLVTPGLIDCHTHLIFGGSRAQEWEQRLNGVSYQTISANGGGINSTVRATRDSSEAELLALAQPRLARLLREGVTTLEIKSGYGLDLQNERKMLRVARQLADDNGVELSATLLSAHATPPEYHGDADGYISLVCETILPTLWQEGLFESVDVFCENVGFSPQQTERVFQAAQALGIPVKGHVEQLSSLGGAQLVSRYHGLSADHIEYLTEEGVAAMRESGTVAALLPGAFYFLNETRKPPVELLRKYQVPMAVATDFNPGTSPFASLHLAMNMACVKFGLTPEEAWAGVTRHAARALGRQDSHGQLAAGFVANFAIWDAEHPVEMVYEPGRAPLWGRVVRGERQ.

H72 and H74 together coordinate Fe(3+). Residues H72 and H74 each coordinate Zn(2+). 4-imidazolone-5-propanoate contacts are provided by R81, Y144, and H177. Y144 contacts N-formimidoyl-L-glutamate. H242 is a binding site for Fe(3+). Residue H242 participates in Zn(2+) binding. Q245 is a 4-imidazolone-5-propanoate binding site. Position 317 (D317) interacts with Fe(3+). Position 317 (D317) interacts with Zn(2+). N319 and G321 together coordinate N-formimidoyl-L-glutamate. Residue T322 participates in 4-imidazolone-5-propanoate binding.

It belongs to the metallo-dependent hydrolases superfamily. HutI family. Zn(2+) is required as a cofactor. It depends on Fe(3+) as a cofactor.

It localises to the cytoplasm. The enzyme catalyses 4-imidazolone-5-propanoate + H2O = N-formimidoyl-L-glutamate. Its pathway is amino-acid degradation; L-histidine degradation into L-glutamate; N-formimidoyl-L-glutamate from L-histidine: step 3/3. Its function is as follows. Catalyzes the hydrolytic cleavage of the carbon-nitrogen bond in imidazolone-5-propanoate to yield N-formimidoyl-L-glutamate. It is the third step in the universal histidine degradation pathway. In Klebsiella pneumoniae (strain 342), this protein is Imidazolonepropionase.